An 89-amino-acid chain; its full sequence is Small ribosomal subunit protein uS15 (89 aa).

This sequence belongs to the universal ribosomal protein uS15 family. As to quaternary structure, part of the 30S ribosomal subunit. Forms a bridge to the 50S subunit in the 70S ribosome, contacting the 23S rRNA.

One of the primary rRNA binding proteins, it binds directly to 16S rRNA where it helps nucleate assembly of the platform of the 30S subunit by binding and bridging several RNA helices of the 16S rRNA. Functionally, forms an intersubunit bridge (bridge B4) with the 23S rRNA of the 50S subunit in the ribosome. This Methylorubrum populi (strain ATCC BAA-705 / NCIMB 13946 / BJ001) (Methylobacterium populi) protein is Small ribosomal subunit protein uS15.